The sequence spans 494 residues: Glycerol kinase (494 aa).

Residue T13 coordinates ADP. T13, T14, and S15 together coordinate ATP. Residue T13 coordinates sn-glycerol 3-phosphate. R17 is an ADP binding site. Residues R83, E84, Y135, and D244 each contribute to the sn-glycerol 3-phosphate site. 5 residues coordinate glycerol: R83, E84, Y135, D244, and Q245. Residues T266 and G309 each coordinate ADP. T266, G309, Q313, and G410 together coordinate ATP. ADP-binding residues include G410 and N414.

The protein belongs to the FGGY kinase family.

The enzyme catalyses glycerol + ATP = sn-glycerol 3-phosphate + ADP + H(+). Its pathway is polyol metabolism; glycerol degradation via glycerol kinase pathway; sn-glycerol 3-phosphate from glycerol: step 1/1. Its activity is regulated as follows. Inhibited by fructose 1,6-bisphosphate (FBP). Its function is as follows. Key enzyme in the regulation of glycerol uptake and metabolism. Catalyzes the phosphorylation of glycerol to yield sn-glycerol 3-phosphate. The chain is Glycerol kinase from Shewanella baltica (strain OS185).